The following is a 211-amino-acid chain: ATP phosphoribosyltransferase (211 aa).

The protein belongs to the ATP phosphoribosyltransferase family. Short subfamily. Heteromultimer composed of HisG and HisZ subunits.

The protein resides in the cytoplasm. It carries out the reaction 1-(5-phospho-beta-D-ribosyl)-ATP + diphosphate = 5-phospho-alpha-D-ribose 1-diphosphate + ATP. It functions in the pathway amino-acid biosynthesis; L-histidine biosynthesis; L-histidine from 5-phospho-alpha-D-ribose 1-diphosphate: step 1/9. Its function is as follows. Catalyzes the condensation of ATP and 5-phosphoribose 1-diphosphate to form N'-(5'-phosphoribosyl)-ATP (PR-ATP). Has a crucial role in the pathway because the rate of histidine biosynthesis seems to be controlled primarily by regulation of HisG enzymatic activity. This chain is ATP phosphoribosyltransferase, found in Pseudomonas putida (strain W619).